The sequence spans 151 residues: uncharacterized protein (151 aa).

This is an uncharacterized protein from Homo sapiens (Human).